The sequence spans 216 residues: Ribosomal RNA large subunit methyltransferase E (216 aa).

5 residues coordinate S-adenosyl-L-methionine: Gly-71, Trp-73, Asp-88, Asp-104, and Asp-126. Lys-166 (proton acceptor) is an active-site residue.

The protein belongs to the class I-like SAM-binding methyltransferase superfamily. RNA methyltransferase RlmE family.

It is found in the cytoplasm. The enzyme catalyses uridine(2552) in 23S rRNA + S-adenosyl-L-methionine = 2'-O-methyluridine(2552) in 23S rRNA + S-adenosyl-L-homocysteine + H(+). In terms of biological role, specifically methylates the uridine in position 2552 of 23S rRNA at the 2'-O position of the ribose in the fully assembled 50S ribosomal subunit. The polypeptide is Ribosomal RNA large subunit methyltransferase E (Wolbachia sp. subsp. Brugia malayi (strain TRS)).